Reading from the N-terminus, the 122-residue chain is Large ribosomal subunit protein uL14 (122 aa).

The protein belongs to the universal ribosomal protein uL14 family. In terms of assembly, part of the 50S ribosomal subunit. Forms a cluster with proteins L3 and L19. In the 70S ribosome, L14 and L19 interact and together make contacts with the 16S rRNA in bridges B5 and B8.

Binds to 23S rRNA. Forms part of two intersubunit bridges in the 70S ribosome. In Granulibacter bethesdensis (strain ATCC BAA-1260 / CGDNIH1), this protein is Large ribosomal subunit protein uL14.